We begin with the raw amino-acid sequence, 181 residues long: Cyclic AMP-dependent transcription factor ATF-3 (181 aa).

The disordered stretch occupies residues 73–97; that stretch reads EMSVTKSEAAPEEDERKRRRRERNK. Residue Lys78 forms a Glycyl lysine isopeptide (Lys-Gly) (interchain with G-Cter in SUMO2) linkage. Residues 86-149 form the bZIP domain; sequence DERKRRRRER…QHLIYMLNLH (64 aa). A basic motif region spans residues 88–110; the sequence is RKRRRRERNKIAAAKCRNKKKEK. Residues 114 to 142 form a leucine-zipper region; the sequence is LQKESEKLESVNAELKAQIEELKNEKQHL. Thr162 bears the Phosphothreonine mark. A Glycyl lysine isopeptide (Lys-Gly) (interchain with G-Cter in SUMO2) cross-link involves residue Lys175.

Belongs to the bZIP family. ATF subfamily. Binds DNA as a homodimer or a heterodimer. Interacts with KAT5; promoting KAT5 autoacetylation and KAT5 deubiquitination by USP7.

It is found in the nucleus. Functionally, this protein binds the cAMP response element (CRE) (consensus: 5'-GTGACGT[AC][AG]-3'), a sequence present in many viral and cellular promoters. Represses transcription from promoters with ATF sites. It may repress transcription by stabilizing the binding of inhibitory cofactors at the promoter. The polypeptide is Cyclic AMP-dependent transcription factor ATF-3 (Mus musculus (Mouse)).